Reading from the N-terminus, the 288-residue chain is MGNDKRVRKPEWLKISIGANERYTETKRIVESHCLHTICSSGRCPNMGECWGKGTATFMIAGDICTRSCKFCNTQTGRPLPLDPDEPTHVAESIALMKLSHAVITSVDRDDLPDLGAAHWAQTIREIKRLNPETTTEVLIPDFQGRKELVDQVIKACPEIISHNMETVKRISPQVRSAANYHTSLEVIRQIAESGITAKSGIMVGLGETPAEVEELMDDLISVGCKILTIGQYLQPTHKHFPVAAYITPEQFAVYKETGLKKGFEQVESAPLVRSSYHAEKHIRFNNK.

Residues Cys39, Cys44, Cys50, Cys65, Cys69, Cys72, and Ser276 each coordinate [4Fe-4S] cluster. A Radical SAM core domain is found at Trp51 to Glu265.

This sequence belongs to the radical SAM superfamily. Lipoyl synthase family. Requires [4Fe-4S] cluster as cofactor.

Its subcellular location is the cytoplasm. The catalysed reaction is [[Fe-S] cluster scaffold protein carrying a second [4Fe-4S](2+) cluster] + N(6)-octanoyl-L-lysyl-[protein] + 2 oxidized [2Fe-2S]-[ferredoxin] + 2 S-adenosyl-L-methionine + 4 H(+) = [[Fe-S] cluster scaffold protein] + N(6)-[(R)-dihydrolipoyl]-L-lysyl-[protein] + 4 Fe(3+) + 2 hydrogen sulfide + 2 5'-deoxyadenosine + 2 L-methionine + 2 reduced [2Fe-2S]-[ferredoxin]. It participates in protein modification; protein lipoylation via endogenous pathway; protein N(6)-(lipoyl)lysine from octanoyl-[acyl-carrier-protein]: step 2/2. In terms of biological role, catalyzes the radical-mediated insertion of two sulfur atoms into the C-6 and C-8 positions of the octanoyl moiety bound to the lipoyl domains of lipoate-dependent enzymes, thereby converting the octanoylated domains into lipoylated derivatives. The polypeptide is Lipoyl synthase (Bacteroides fragilis (strain ATCC 25285 / DSM 2151 / CCUG 4856 / JCM 11019 / LMG 10263 / NCTC 9343 / Onslow / VPI 2553 / EN-2)).